The following is a 509-amino-acid chain: MEEFQRYIELDRSWQHNFFYPLIFQEYIYGFAYDHGLNKSILLENAGDKKYSLLIVKRLITRMYQQNHLILSANHSNQNDFFGHKHKKNLYYQIISEGFAVIVEIPFSLLLISSLGAKEKKIVKSHNLRSIHSIFPFFEDKFLHLNYVLEILIPYPIHLEILVQTLRYWVKDASSLHLLRFFLYEYRNWNSLITTQKSISIFSKRNQRLFLFLYNFHVCEYESIFVFLCNQSSHLRSTSFGALLERIYFYGKLEYLVKVFTFTKDFRVILWLFKDPFLHYVRYRGKSILASKGTSLLMHKWKYYLINFWQCHFSLWSQPRRIYINRLSKHSLDFMDFFSSVRLNSSVVRSQMVENSFLIDNPIKKFDTIVRIIPLVGSLAKAKFCNVLGHPISKSVWTDLLDSDIIDRFGRICRNLSHYYSGSSRKKSLYRIKYILRLSCARTLARKHKSTVRAFLKRLGSEFLEEFFTEEEKVLSLILPRDSSISRGLYRGPFWYLDIFCIHDLANDE.

This sequence belongs to the intron maturase 2 family. MatK subfamily.

Its subcellular location is the plastid. It localises to the chloroplast. Functionally, usually encoded in the trnK tRNA gene intron. Probably assists in splicing its own and other chloroplast group II introns. The sequence is that of Maturase K from Pereskia aculeata (Barbados gooseberry).